The chain runs to 386 residues: Succinate--CoA ligase [ADP-forming] subunit beta (386 aa).

Positions 9 to 244 (KEILHKFNVP…YDEEVKEEIE (236 aa)) constitute an ATP-grasp domain. ATP-binding positions include K46, 53–55 (GRG), E99, S102, and E107. Mg(2+) contacts are provided by N199 and D213. Substrate-binding positions include N264 and 321-323 (GIM).

This sequence belongs to the succinate/malate CoA ligase beta subunit family. As to quaternary structure, heterotetramer of two alpha and two beta subunits. Mg(2+) serves as cofactor.

The catalysed reaction is succinate + ATP + CoA = succinyl-CoA + ADP + phosphate. The enzyme catalyses GTP + succinate + CoA = succinyl-CoA + GDP + phosphate. It participates in carbohydrate metabolism; tricarboxylic acid cycle; succinate from succinyl-CoA (ligase route): step 1/1. Functionally, succinyl-CoA synthetase functions in the citric acid cycle (TCA), coupling the hydrolysis of succinyl-CoA to the synthesis of either ATP or GTP and thus represents the only step of substrate-level phosphorylation in the TCA. The beta subunit provides nucleotide specificity of the enzyme and binds the substrate succinate, while the binding sites for coenzyme A and phosphate are found in the alpha subunit. The sequence is that of Succinate--CoA ligase [ADP-forming] subunit beta from Wolbachia sp. subsp. Brugia malayi (strain TRS).